Consider the following 289-residue polypeptide: Deleted in azoospermia-like (289 aa).

Residues 1–20 (MSANAEAQCGSISEDNTHSS) are disordered. The region spanning 36–117 (NTVFVGGIDI…PAIRKQQNLC (82 aa)) is the RRM domain. The DAZ domain occupies 162 to 187 (TYAYSSPAVLIQQQVPVGYQPAYNYQ).

It belongs to the RRM DAZ family.

It is found in the cytoplasm. Its function is as follows. RNA-binding protein, which probably plays a central role in gametogenesis in both males and females. Acts by binding to the 3'-UTR of mRNA, specifically recognizing GUU triplets, and promoting the translation of key transcripts. This chain is Deleted in azoospermia-like (DAZL), found in Gallus gallus (Chicken).